The primary structure comprises 644 residues: Threonine--tRNA ligase (644 aa).

Residues methionine 1 to threonine 61 form the TGS domain. The tract at residues aspartate 242–proline 533 is catalytic. Zn(2+)-binding residues include cysteine 333, histidine 384, and histidine 510.

Belongs to the class-II aminoacyl-tRNA synthetase family. As to quaternary structure, homodimer. Zn(2+) serves as cofactor.

Its subcellular location is the cytoplasm. The catalysed reaction is tRNA(Thr) + L-threonine + ATP = L-threonyl-tRNA(Thr) + AMP + diphosphate + H(+). Functionally, catalyzes the attachment of threonine to tRNA(Thr) in a two-step reaction: L-threonine is first activated by ATP to form Thr-AMP and then transferred to the acceptor end of tRNA(Thr). Also edits incorrectly charged L-seryl-tRNA(Thr). This chain is Threonine--tRNA ligase, found in Psychrobacter sp. (strain PRwf-1).